The primary structure comprises 423 residues: D-tagatose-1,6-bisphosphate aldolase subunit GatZ (423 aa).

It belongs to the GatZ/KbaZ family. GatZ subfamily. As to quaternary structure, forms a complex with GatY.

It participates in carbohydrate metabolism; D-tagatose 6-phosphate degradation; D-glyceraldehyde 3-phosphate and glycerone phosphate from D-tagatose 6-phosphate: step 2/2. Its function is as follows. Component of the tagatose-1,6-bisphosphate aldolase GatYZ that is required for full activity and stability of the Y subunit. Could have a chaperone-like function for the proper and stable folding of GatY. When expressed alone, GatZ does not show any aldolase activity. Is involved in the catabolism of galactitol. The sequence is that of D-tagatose-1,6-bisphosphate aldolase subunit GatZ from Salmonella gallinarum (strain 287/91 / NCTC 13346).